The following is a 450-amino-acid chain: MRECISIHVGQAGVQIGNACWELYCLEHGIQPDGQMPSDKTVGGGDDSFNTFFSETGAGKHVPRAVFVDLEPTVVDEVRTGTYRQLFHPEQLITGKEDAANNYARGHYTIGKEIVDLVLDRIRKLADQCTGLQGFLIFHSFGGGTGSGFTSLLMERLSVDYGKKSKLEFAIYPAPQVSTAVVEPYNSILTTHTTLEHSDCAFMVDNEAIYDICRRNLDIERPTYTNLNRLIGQIVSSITASLRFDGALNVDLTEFQTNLVPYPRIHFPLVTYAPVISAEKAYHEQLSVAEITNACFEPANQMVKCDPRHGKYMACCMLYRGDVVPKDVNAAIATIKTKRTIQFVDWCPTGFKVGINYQPPTVVPGGDLAKVQRAVCMLSNTTAIAEAWARLDHKFDLMYAKRAFVHWYVGEGMEEGEFSEAREDLAALEKDYEEVGMDSGDGEGEGAEEY.

Residue Q11 participates in GTP binding. An N6-acetyllysine modification is found at K40. GTP-binding residues include E71, S140, G144, T145, T179, N206, and N228. E71 contributes to the Mg(2+) binding site. Residue E254 is part of the active site.

It belongs to the tubulin family. In terms of assembly, dimer of alpha and beta chains. A typical microtubule is a hollow water-filled tube with an outer diameter of 25 nm and an inner diameter of 15 nM. Alpha-beta heterodimers associate head-to-tail to form protofilaments running lengthwise along the microtubule wall with the beta-tubulin subunit facing the microtubule plus end conferring a structural polarity. Microtubules usually have 13 protofilaments but different protofilament numbers can be found in some organisms and specialized cells. Interacts with Ote. It depends on Mg(2+) as a cofactor. Post-translationally, undergoes a tyrosination/detyrosination cycle, the cyclic removal and re-addition of a C-terminal tyrosine residue by the enzymes tubulin tyrosine carboxypeptidase (TTCP) and tubulin tyrosine ligase (TTL), respectively. In terms of processing, acetylation of alpha chains at Lys-40 stabilizes microtubules and affects affinity and processivity of microtubule motors. This modification has a role in multiple cellular functions, ranging from cell motility, cell cycle progression or cell differentiation to intracellular trafficking and signaling. During the early stages of oogenesis lky/Alpha-tubulin N-acetyltransferase 2 is the main acetyltransferase responsible for Lys-40 acetylation in germline cells while Atat/alpha-tubulin N-acetyltransferase 1 is the main acetyltransferase responsible for Lys-40 acetylation in somatic cells.

It localises to the cytoplasm. It is found in the cytoskeleton. It carries out the reaction GTP + H2O = GDP + phosphate + H(+). In terms of biological role, tubulin is the major constituent of microtubules, a cylinder consisting of laterally associated linear protofilaments composed of alpha- and beta-tubulin heterodimers. Microtubules grow by the addition of GTP-tubulin dimers to the microtubule end, where a stabilizing cap forms. Below the cap, tubulin dimers are in GDP-bound state, owing to GTPase activity of alpha-tubulin. The chain is Tubulin alpha-1 chain (alphaTub84B) from Drosophila melanogaster (Fruit fly).